The primary structure comprises 257 residues: MLAVLSPAKRLAAQPALDLPADLAPSEPRLQDQADALARVARDLTAADLRRLMHISEPLARLNVARFAEFHEARNAAVPAVALFDGDTYAGLEARTMDADALRWAQERICILSGLYGLLRPLDRIQPHRLEMGTRLATERGATLYDFWGDRIAEALNARAAETGARVLVNCASVEYFTAADRAALKLPVITPTFLEERNGERKIVSFWAKRARGAMARFIAENRLDDPEDLRAFRAGGYAYEPDLSTDERPVFLRAG.

It belongs to the UPF0246 family.

The polypeptide is UPF0246 protein RHOS4_29700 (Cereibacter sphaeroides (strain ATCC 17023 / DSM 158 / JCM 6121 / CCUG 31486 / LMG 2827 / NBRC 12203 / NCIMB 8253 / ATH 2.4.1.) (Rhodobacter sphaeroides)).